We begin with the raw amino-acid sequence, 184 residues long: UPF0397 protein SAR2767 (184 aa).

5 helical membrane-spanning segments follow: residues 11 to 31 (VVAI…VVIP), 44 to 64 (AFLA…TGLI), 77 to 97 (AWWS…WIGL), 117 to 137 (GQII…DILI), and 148 to 168 (QGVI…TILL).

Belongs to the UPF0397 family.

Its subcellular location is the cell membrane. The protein is UPF0397 protein SAR2767 of Staphylococcus aureus (strain MRSA252).